A 290-amino-acid chain; its full sequence is Sodium/potassium-transporting ATPase subunit beta-2 (290 aa).

The Cytoplasmic segment spans residues 1 to 39 (MVIQKEKKSCGQVVEEWKEFVWNPRTHQFMGRTGTSWAF). Residues 40–67 (ILLFYLVFYGFLTAMFTLTMWVMLQTVS) form a helical; Signal-anchor for type II membrane protein membrane-spanning segment. Over 68-290 (EHTPKYQDRL…VAFKLRINKT (223 aa)) the chain is Extracellular. N-linked (GlcNAc...) asparagine glycosylation is found at asparagine 96 and asparagine 118. A disulfide bond links cysteine 129 and cysteine 150. Asparagine 153 and asparagine 159 each carry an N-linked (GlcNAc...) asparagine glycan. Cysteines 160 and 177 form a disulfide. 3 N-linked (GlcNAc...) asparagine glycosylation sites follow: asparagine 193, asparagine 197, and asparagine 238. The tract at residues 193–290 (NQSMNVTCAG…VAFKLRINKT (98 aa)) is immunoglobulin-like. Cysteine 200 and cysteine 261 form a disulfide bridge.

Belongs to the X(+)/potassium ATPases subunit beta family. As to quaternary structure, the sodium/potassium-transporting ATPase is composed of a catalytic alpha subunit, an auxiliary non-catalytic beta subunit and an additional regulatory subunit. Interacts with BSG.

Its subcellular location is the cell membrane. Functionally, this is the non-catalytic component of the active enzyme, which catalyzes the hydrolysis of ATP coupled with the exchange of Na(+) and K(+) ions across the plasma membrane. The exact function of the beta-2 subunit is not known. In terms of biological role, mediates cell adhesion of neurons and astrocytes, and promotes neurite outgrowth. This chain is Sodium/potassium-transporting ATPase subunit beta-2 (ATP1B2), found in Oryctolagus cuniculus (Rabbit).